The following is a 1068-amino-acid chain: Sucrose-phosphate synthase (1068 aa).

2 disordered regions span residues 18 to 47 and 118 to 139; these read HTSS…GAHM and KEQE…SEGE. A compositionally biased stretch (gly residues) spans 23 to 32; the sequence is GAGGGGGGGD. Positions 118 to 128 are enriched in basic and acidic residues; it reads KEQEQVRREAT.

It belongs to the glycosyltransferase 1 family. In terms of assembly, homodimer or homotetramer.

It catalyses the reaction beta-D-fructose 6-phosphate + UDP-alpha-D-glucose = sucrose 6(F)-phosphate + UDP + H(+). It functions in the pathway glycan biosynthesis; sucrose biosynthesis; sucrose from D-fructose 6-phosphate and UDP-alpha-D-glucose: step 1/2. Activity is regulated by phosphorylation and moderated by concentration of metabolites and light. Its function is as follows. Plays a role in photosynthetic sucrose synthesis by catalyzing the rate-limiting step of sucrose biosynthesis from UDP-glucose and fructose- 6-phosphate. Involved in the regulation of carbon partitioning in the leaves of plants. May regulate the synthesis of sucrose and therefore play a major role as a limiting factor in the export of photoassimilates out of the leaf. Plays a role for sucrose availability that is essential for plant growth and fiber elongation. The polypeptide is Sucrose-phosphate synthase (Zea mays (Maize)).